Here is a 610-residue protein sequence, read N- to C-terminus: Elongation factor 4 (610 aa).

A tr-type G domain is found at 11–193 (EKIRNFSIIA…QIVEKVPAPT (183 aa)). Residues 23–28 (DHGKST) and 140–143 (NKID) contribute to the GTP site.

This sequence belongs to the TRAFAC class translation factor GTPase superfamily. Classic translation factor GTPase family. LepA subfamily.

The protein resides in the cell membrane. The catalysed reaction is GTP + H2O = GDP + phosphate + H(+). In terms of biological role, required for accurate and efficient protein synthesis under certain stress conditions. May act as a fidelity factor of the translation reaction, by catalyzing a one-codon backward translocation of tRNAs on improperly translocated ribosomes. Back-translocation proceeds from a post-translocation (POST) complex to a pre-translocation (PRE) complex, thus giving elongation factor G a second chance to translocate the tRNAs correctly. Binds to ribosomes in a GTP-dependent manner. In Streptococcus pyogenes serotype M2 (strain MGAS10270), this protein is Elongation factor 4.